The sequence spans 331 residues: DNA polymerase III subunit delta (331 aa).

This sequence belongs to the DNA polymerase HolA subunit family. In terms of assembly, DNA polymerase III contains a core (composed of alpha, epsilon and theta chains) that associates with a tau subunit. This core dimerizes to form the POLIII' complex. PolIII' associates with the gamma complex (composed of gamma, delta, delta', psi and chi chains) and with the beta chain to form the complete DNA polymerase III complex.

It catalyses the reaction DNA(n) + a 2'-deoxyribonucleoside 5'-triphosphate = DNA(n+1) + diphosphate. Functionally, DNA polymerase III is a complex, multichain enzyme responsible for most of the replicative synthesis in bacteria. This DNA polymerase also exhibits 3' to 5' exonuclease activity. The delta subunit seems to interact with the gamma subunit to transfer the beta subunit on the DNA. This is DNA polymerase III subunit delta (holA) from Buchnera aphidicola subsp. Acyrthosiphon pisum (strain APS) (Acyrthosiphon pisum symbiotic bacterium).